The following is a 549-amino-acid chain: Nectin-3 (549 aa).

Residues 1-57 form the signal peptide; that stretch reads MARTLRPSPLCPGGGKAQLSSASLLGAGLLLQPPTPPPLLLLLFPLLLFSRLCGALA. Over 58–404 the chain is Extracellular; that stretch reads GPIIVEPHVT…ATIKDDTIAT (347 aa). One can recognise an Ig-like V-type domain in the interval 59-165; it reads PIIVEPHVTA…GNAQSSTTVT (107 aa). Residues Asn73, Asn83, Asn125, Asn186, Asn222, and Asn331 are each glycosylated (N-linked (GlcNAc...) asparagine). Residues Cys78 and Cys148 are joined by a disulfide bond. 2 consecutive Ig-like C2-type domains span residues 170–258 and 269–354; these read PTVS…KDIR and PEVS…KVIY. 2 disulfides stabilise this stretch: Cys193/Cys246 and Cys291/Cys338. Residues 405 to 425 traverse the membrane as a helical segment; sequence IIASVVGGALFIVLVSVLAGI. The Cytoplasmic portion of the chain corresponds to 426 to 549; it reads FCYRRRRTFR…SVISRREWYV (124 aa).

The protein belongs to the nectin family. Cis- and trans-homodimer. Can form trans-heterodimers with NECTIN1, NECTIN2, PVR, IGSF4B/Necl-1 and with IGSF4. Interaction between NECTIN1 and NECTIN3 on the pre- and postsynaptic sites, respectively, initiates the formation of puncta adherentia junctions between axons and dendrites. Interacts (via Cytoplasmic domain) with AFDN, providing a connection with the actin cytoskeleton. Binds with low affinity to TIGIT. As to quaternary structure, (Microbial infection) Interacts with C.difficile toxin TcdB, suggesting that it may contribute to TcdB toxin entry into cells. It was however shown that NECTIN3/PVRL3 does not act as a major receptor for TcdB. As to expression, predominantly expressed in testis and placenta as well as in many cell lines, including epithelial cell lines.

It localises to the cell membrane. The protein resides in the postsynaptic cell membrane. Its subcellular location is the cell junction. The protein localises to the adherens junction. Cell adhesion molecule that promotes cell-cell adhesion through heterophilic trans-interactions with nectins-like or other nectins, such as trans-interaction with NECTIN2 at Sertoli-spermatid junctions. Trans-interaction with PVR induces activation of CDC42 and RAC small G proteins through common signaling molecules such as SRC and RAP1. Induces endocytosis-mediated down-regulation of PVR from the cell surface, resulting in reduction of cell movement and proliferation. Involved in axon guidance by promoting contacts between the commissural axons and the floor plate cells. Also involved in the formation of cell-cell junctions, including adherens junctions and synapses. Promotes formation of checkerboard-like cellular pattern of hair cells and supporting cells in the auditory epithelium via heterophilic interaction with NECTIN1: NECTIN1 is present in the membrane of hair cells and associates with NECTIN3 on supporting cells, thereby mediating heterotypic adhesion between these two cell types. Plays a role in the morphology of the ciliary body. The chain is Nectin-3 from Homo sapiens (Human).